We begin with the raw amino-acid sequence, 401 residues long: Methyltransferase cfoC (401 aa).

Aspartate 268 serves as a coordination point for S-adenosyl-L-methionine. Histidine 308 acts as the Proton acceptor in catalysis.

This sequence belongs to the class I-like SAM-binding methyltransferase superfamily. Cation-independent O-methyltransferase family.

It participates in secondary metabolite biosynthesis; flavonoid biosynthesis. Functionally, methyltransferase; part of the gene cluster that mediates the biosynthesis of chlorflavonin, a fungal flavonoid with acetolactate synthase inhibitory activity. Within the pathway, cfoC is responsible for the methylation at position C8-OH of flavonoid. The pathway begins with the PKS-NRPS hybrid synthetase cfoA that uses benzoic acid or p-hydroxybenzoic acid as a starter unit with four rounds of chain elongation using malonyl-CoA to form the chalcone skeleton. Then, a new type of chalcone isomerase, cfoK, catalyzes the conversion of the chalcone into a flavanone by a histidine-mediated oxa-Michael addition mechanism. The desaturation of flavanone to flavone is catalyzed by a new type of flavone synthase, the flavin mononucleotide (FMN)-dependent oxidoreductase cfoJ. Monooxygenases cfoF, cfoG, and P450 cfoH are responsible for the hydroxylation of the flavonoid skeleton at sites C3, C8, and C2', respectively. Like cfoF, the dehydratase cfoI also plays a role in the hydroxylation of position C3. Methyltransferases cfoB, cfoC, and cfoD then catalyze the methylation of C7-OH, C8-OH, and C3-OH, respectively. Finally, the monooxygenase cfoE is responsible for the chlorination of flavonoid at position C3'. The protein is Methyltransferase cfoC of Aspergillus candidus.